A 186-amino-acid chain; its full sequence is Dihydrofolate reductase (186 aa).

A DHFR domain is found at Lys-3–Lys-183. NADP(+) is bound by residues Ala-9 and Gly-15–Asp-21. Position 29–34 (Glu-29–Ser-34) interacts with substrate. Arg-53 to Thr-55 provides a ligand contact to NADP(+). Arg-69 is a substrate binding site. Residues Thr-75–Asp-77 and Gly-116–Glu-123 contribute to the NADP(+) site.

The protein belongs to the dihydrofolate reductase family.

The catalysed reaction is (6S)-5,6,7,8-tetrahydrofolate + NADP(+) = 7,8-dihydrofolate + NADPH + H(+). It participates in cofactor biosynthesis; tetrahydrofolate biosynthesis; 5,6,7,8-tetrahydrofolate from 7,8-dihydrofolate: step 1/1. In terms of biological role, key enzyme in folate metabolism. Catalyzes an essential reaction for de novo glycine and purine synthesis, and for DNA precursor synthesis. The polypeptide is Dihydrofolate reductase (DHFR) (Aedes albopictus (Asian tiger mosquito)).